The sequence spans 351 residues: Pentatricopeptide repeat-containing protein At2g40240, mitochondrial (351 aa).

The N-terminal 27 residues, 1–27 (MSLLRRRFVKQSVNCITFLQILAERSF), are a transit peptide targeting the mitochondrion. 6 PPR repeats span residues 106-140 (RKNAYDILISRLCKLGRIDDALIVIGDMSNGRLGL), 141-175 (TPSTYHPILCSLTRKYKIEEAWRVVESMRSKSVSM), 176-210 (DVTAYNYFLTSHCYDGELESASEVMRKIEEDGNSP), 211-245 (DSRSYDALVLGACRAGKVEAAMAILRRMEEDGVTV), 246-280 (LYSTHAHVITGLVEGGYYALGLEFVMAYAGKDLRL), and 281-315 (DSESFGFLAGKLVKRKRYEEAMIVVKEMVMRGLRM).

This sequence belongs to the PPR family. P subfamily.

Its subcellular location is the mitochondrion. The sequence is that of Pentatricopeptide repeat-containing protein At2g40240, mitochondrial from Arabidopsis thaliana (Mouse-ear cress).